Consider the following 96-residue polypeptide: Small ribosomal subunit protein bS18 (96 aa).

It belongs to the bacterial ribosomal protein bS18 family. As to quaternary structure, part of the 30S ribosomal subunit. Forms a tight heterodimer with protein bS6.

Its function is as follows. Binds as a heterodimer with protein bS6 to the central domain of the 16S rRNA, where it helps stabilize the platform of the 30S subunit. The chain is Small ribosomal subunit protein bS18 from Gluconobacter oxydans (strain 621H) (Gluconobacter suboxydans).